A 378-amino-acid chain; its full sequence is UDP-N-acetylglucosamine--N-acetylmuramyl-(pentapeptide) pyrophosphoryl-undecaprenol N-acetylglucosamine transferase (378 aa).

UDP-N-acetyl-alpha-D-glucosamine-binding positions include 14–16 (TGG), asparagine 125, arginine 165, serine 193, and glutamine 293.

This sequence belongs to the glycosyltransferase 28 family. MurG subfamily.

The protein resides in the cell inner membrane. The catalysed reaction is di-trans,octa-cis-undecaprenyl diphospho-N-acetyl-alpha-D-muramoyl-L-alanyl-D-glutamyl-meso-2,6-diaminopimeloyl-D-alanyl-D-alanine + UDP-N-acetyl-alpha-D-glucosamine = di-trans,octa-cis-undecaprenyl diphospho-[N-acetyl-alpha-D-glucosaminyl-(1-&gt;4)]-N-acetyl-alpha-D-muramoyl-L-alanyl-D-glutamyl-meso-2,6-diaminopimeloyl-D-alanyl-D-alanine + UDP + H(+). It functions in the pathway cell wall biogenesis; peptidoglycan biosynthesis. Functionally, cell wall formation. Catalyzes the transfer of a GlcNAc subunit on undecaprenyl-pyrophosphoryl-MurNAc-pentapeptide (lipid intermediate I) to form undecaprenyl-pyrophosphoryl-MurNAc-(pentapeptide)GlcNAc (lipid intermediate II). The chain is UDP-N-acetylglucosamine--N-acetylmuramyl-(pentapeptide) pyrophosphoryl-undecaprenol N-acetylglucosamine transferase from Bartonella quintana (strain Toulouse) (Rochalimaea quintana).